The following is a 644-amino-acid chain: Chaperone protein DnaK (644 aa).

Thr199 carries the post-translational modification Phosphothreonine; by autocatalysis. Residues 605–644 (KKSSEGQAAQGQTQSQESTKPAEEGVVDAEFEEVKEEDKK) form a disordered region. Residues 609 to 623 (EGQAAQGQTQSQEST) show a composition bias toward polar residues. Over residues 629 to 644 (GVVDAEFEEVKEEDKK) the composition is skewed to acidic residues.

Belongs to the heat shock protein 70 family.

Its function is as follows. Acts as a chaperone. The sequence is that of Chaperone protein DnaK from Legionella pneumophila subsp. pneumophila (strain Philadelphia 1 / ATCC 33152 / DSM 7513).